A 319-amino-acid polypeptide reads, in one-letter code: Cobalamin biosynthesis protein CobD (319 aa).

4 consecutive transmembrane segments (helical) span residues 56–76, 153–173, 204–224, and 290–310; these read GLWIVVVGLTWLVSWGCLWLM, VDGVIAPLFFLMIGGAPLAMA, LANWLPARLSWLLLSAAAWFI, and IPLSIYLMMIASQLALLLFAL.

This sequence belongs to the CobD/CbiB family.

The protein resides in the cell membrane. It functions in the pathway cofactor biosynthesis; adenosylcobalamin biosynthesis. Its function is as follows. Converts cobyric acid to cobinamide by the addition of aminopropanol on the F carboxylic group. This chain is Cobalamin biosynthesis protein CobD, found in Photorhabdus laumondii subsp. laumondii (strain DSM 15139 / CIP 105565 / TT01) (Photorhabdus luminescens subsp. laumondii).